The following is a 396-amino-acid chain: Mevalonate kinase (396 aa).

Residues Lys13, Asn55, Ser135, and 140 to 146 (GAGLGSS) contribute to the ATP site. Residue Ser146 is the Proton donor of the active site. Ser146 and Glu193 together coordinate Mg(2+). Asp204 functions as the Proton acceptor in the catalytic mechanism.

The protein belongs to the GHMP kinase family. Mevalonate kinase subfamily. In terms of assembly, homodimer. Mg(2+) is required as a cofactor.

The protein resides in the cytoplasm. The protein localises to the peroxisome. The enzyme catalyses (R)-mevalonate + ATP = (R)-5-phosphomevalonate + ADP + H(+). Its pathway is isoprenoid biosynthesis; isopentenyl diphosphate biosynthesis via mevalonate pathway; isopentenyl diphosphate from (R)-mevalonate: step 1/3. Farnesyl pyrophosphate and geranyl pyrophosphate inhibit mevalonate kinase activity by binding competitively at the ATP-binding sites. Catalyzes the phosphorylation of mevalonate to mevalonate 5-phosphate, a key step in isoprenoid and cholesterol biosynthesis. In Homo sapiens (Human), this protein is Mevalonate kinase.